The primary structure comprises 132 residues: Small ribosomal subunit protein uS8 (132 aa).

Belongs to the universal ribosomal protein uS8 family. In terms of assembly, part of the 30S ribosomal subunit. Contacts proteins S5 and S12.

Its function is as follows. One of the primary rRNA binding proteins, it binds directly to 16S rRNA central domain where it helps coordinate assembly of the platform of the 30S subunit. The protein is Small ribosomal subunit protein uS8 of Geotalea daltonii (strain DSM 22248 / JCM 15807 / FRC-32) (Geobacter daltonii).